A 436-amino-acid polypeptide reads, in one-letter code: UDP-N-acetylmuramate--L-alanine ligase (436 aa).

An ATP-binding site is contributed by 108 to 114; sequence GAHGKTS.

The protein belongs to the MurCDEF family.

It is found in the cytoplasm. It carries out the reaction UDP-N-acetyl-alpha-D-muramate + L-alanine + ATP = UDP-N-acetyl-alpha-D-muramoyl-L-alanine + ADP + phosphate + H(+). The protein operates within cell wall biogenesis; peptidoglycan biosynthesis. Its function is as follows. Cell wall formation. In Bacillus cereus (strain B4264), this protein is UDP-N-acetylmuramate--L-alanine ligase.